The primary structure comprises 100 residues: Urease subunit gamma (100 aa).

It belongs to the urease gamma subunit family. In terms of assembly, heterotrimer of UreA (gamma), UreB (beta) and UreC (alpha) subunits. Three heterotrimers associate to form the active enzyme.

Its subcellular location is the cytoplasm. The enzyme catalyses urea + 2 H2O + H(+) = hydrogencarbonate + 2 NH4(+). It participates in nitrogen metabolism; urea degradation; CO(2) and NH(3) from urea (urease route): step 1/1. In Cupriavidus metallidurans (strain ATCC 43123 / DSM 2839 / NBRC 102507 / CH34) (Ralstonia metallidurans), this protein is Urease subunit gamma.